Consider the following 150-residue polypeptide: Arginine repressor (150 aa).

The protein belongs to the ArgR family.

It localises to the cytoplasm. Its pathway is amino-acid biosynthesis; L-arginine biosynthesis [regulation]. Regulates arginine biosynthesis genes. This is Arginine repressor from Thermoanaerobacter sp. (strain X514).